Consider the following 1257-residue polypeptide: Stromal processing peptidase, chloroplastic (1257 aa).

The N-terminal 142 residues, methionine 1 to histidine 142, are a transit peptide targeting the chloroplast. Histidine 236 contacts Zn(2+). Glutamate 239 serves as the catalytic Proton acceptor. Histidine 240 is a Zn(2+) binding site. The active site involves glutamate 309. Residue glutamate 316 participates in Zn(2+) binding. The interval glutamate 1233 to threonine 1257 is disordered.

This sequence belongs to the peptidase M16 family. Zn(2+) is required as a cofactor.

The protein localises to the plastid. The protein resides in the chloroplast stroma. Functionally, cleaves presequences (transit peptides) from chloroplastic protein precursors. Initially recognizes a precursor by binding to the C-terminus of its transit peptide and then removes the transit peptide in a single endoproteolytic step. In a next step, pursues the cleavage of transit peptide to a subfragment form. The sequence is that of Stromal processing peptidase, chloroplastic from Pisum sativum (Garden pea).